A 1233-amino-acid polypeptide reads, in one-letter code: NACHT, LRR and PYD domains-containing protein 1b allele 1 (1233 aa).

Positions 1–22 (MEESPPKQKSNTKVAQHEGQQD) are disordered. The region spanning 126 to 435 (QLVIIEGAAG…EFFAAISCIL (310 aa)) is the NACHT domain. 132–139 (GAAGIGKS) lines the ATP pocket. LRR repeat units lie at residues 627 to 647 (NLEG…QSLC) and 684 to 704 (SLTE…RMLC). Residues 850–983 (FWGPIGPVAT…GYTVLKNPSF (134 aa)) are ZU5. Residues 850 to 1133 (FWGPIGPVAT…LRPALPRIAQ (284 aa)) form the FIIND domain. The tract at residues 984 to 1133 (SPMGVVLRII…LRPALPRIAQ (150 aa)) is UPA. Residues 1143–1226 (HFMDQHREQL…HLVMDLLEKS (84 aa)) form the CARD domain.

The protein belongs to the NLRP family. Interacts with DPP9; leading to inhibit activation of the inflammasome. DPP9 acts via formation of a ternary complex, composed of a DPP9 homodimer, one full-length Nlrp1b protein, and one cleaved C-terminus of Nlrp1b (NACHT, LRR and PYD domains-containing protein 1b, C-terminus). Interacts with DPP8; leading to inhibit activation of the inflammasome, probably via formation of a ternary complex with DPP8. Interacts (via LRR repeats) with BCL2 and BCL2L1 (via the loop between motifs BH4 and BH3). Interacts with NOD2; this interaction may increase IL1B release. Interacts with EIF2AK2/PKR; this interaction requires EIF2AK2 activity, is accompanied by EIF2AK2 autophosphorylation and promotes inflammasome assembly in response to B.anthracis lethal toxin. Interacts with MEFV; this interaction targets Nlrp1b to degradation by autophagy, hence preventing excessive IL1B- and IL18-mediated inflammation. As to quaternary structure, interacts with the C-terminal part of Nlrp1b (NACHT, LRR and PYD domains-containing protein 1b, C-terminus) in absence of pathogens and other damage-associated signals. In terms of assembly, interacts with the N-terminal part of Nlrp1b (NACHT, LRR and PYD domains-containing protein 1b, N-terminus) in absence of pathogens and other damage-associated signals. Homomultimer; forms the Nlrp1b inflammasome polymeric complex, a filament composed of homopolymers of this form in response to pathogens and other damage-associated signals. The Nlrp1b inflammasome polymeric complex directly recruits pro-caspase-1 (proCASP1) independently of PYCARD/ASC. Interacts (via CARD domain) with CASP1 (via CARD domain); leading to CASP1 activation. Post-translationally, autocatalytically cleaved. Autocatalytic cleavage in FIIND region occurs constitutively, prior to activation signals, and is required for inflammasome activity (IL1B release), possibly by facilitating CASP1 binding. Both N- and C-terminal parts remain associated non-covalently. Ubiquitinated by UBR2, a component of the N-end rule pathway in response to pathogens and other damage-associated signals, leading to its degradation by the proteasome and subsequent release of the cleaved C-terminal part of the protein (NACHT, LRR and PYD domains-containing protein 1b, C-terminus), which polymerizes and forms the Nlrp1b inflammasome. In terms of processing, (Microbial infection) Cleavage by B.anthracis lethal toxin (LT) endopeptidase promotes ubiquitination and degradation of the N-terminal part, releasing the cleaved C-terminal part of the protein (NACHT, LRR and PYD domains-containing protein 1b, C-terminus), which polymerizes and forms the Nlrp1b inflammasome. Post-translationally, (Microbial infection) Ubiquitinated by S.flexneri IpaH7.8, leading to its degradation by the proteasome and subsequent release of the cleaved C-terminal part of the protein (NACHT, LRR and PYD domains-containing protein 1b, C-terminus), which polymerizes and forms the Nlrp1b inflammasome. As to expression, widely expressed, including in macrophages.

The protein resides in the cytoplasm. Its subcellular location is the cytosol. It localises to the membrane. The protein localises to the inflammasome. Activated by cleavage by B.anthracis lethal toxin (LT) endopeptidase: cleavage by LT promotes ubiquitination and degradation of the N-terminal part, releasing the cleaved C-terminal part of the protein (NACHT, LRR and PYD domains-containing protein 1b, C-terminus), which polymerizes and forms the Nlrp1b inflammasome. Activated by S.flexneri IpaH7.8, an E3 ubiquitin ligase that mediates ubiquitination and degradation of the N-terminal part, releasing the cleaved C-terminal part of the protein, which polymerizes and forms the Nlrp1b inflammasome. Nlrp1b inflammasome is inhibited by DPP8 and DPP9, which sequester the C-terminal fragment of Nlrp1b (NACHT, LRR and PYD domains-containing protein 1b, C-terminus) in a ternary complex, thereby preventing Nlrp1b oligomerization and activation. Nlrp1b inflammasome is activated by Val-boroPro (Talabostat, PT-100), an inhibitor of dipeptidyl peptidases DPP8 and DPP9. Val-boroPro relieves inhibition of DPP8 and/or DPP9 by promoting disruption of the ternary complex, releasing its C-terminal part from autoinhibition. Activated by metabolic inhibitors, such as 2-deoxy-D-glucose and sodium azide, by nutrient deprivation and hypoxia, possibly due to a decrease in cytosolic ATP. Also activated by Toxoplasma gondii. Not activated by muramyl dipeptide, nor by full-length bacterial peptidoglycan. Contrary to its human ortholog, not activated by positive-strand RNA virus such as Semliki Forrest virus or long dsRNA. Functionally, acts as the sensor component of the Nlrp1b inflammasome, which mediates inflammasome activation in response to various pathogen-associated signals, leading to subsequent pyroptosis. Inflammasomes are supramolecular complexes that assemble in the cytosol in response to pathogens and other damage-associated signals and play critical roles in innate immunity and inflammation. Acts as a recognition receptor (PRR): recognizes specific pathogens and other damage-associated signals, such as B.anthracis lethal toxin (LT) or Val-boroPro inhibitor, and mediates the formation of the inflammasome polymeric complex. In response to pathogen-associated signals, the N-terminal part of Nlrp1b is degraded by the proteasome, releasing the cleaved C-terminal part of the protein (NACHT, LRR and PYD domains-containing protein 1b, C-terminus), which polymerizes to initiate the formation of the inflammasome complex: the inflammasome directly recruits pro-caspase-1 (proCASP1) independently of PYCARD/ASC and promotes caspase-1 (CASP1) activation, which subsequently cleaves and activates inflammatory cytokines IL1B and IL18 and gasdermin-D (GSDMD), leading to pyroptosis. In the absence of GSDMD expression, the Nlrp1b inflammasome is able to recruit and activate CASP8, leading to activation of gasdermin-E (GSDME). Activation of Nlrp1b inflammasome is also required for HMGB1 secretion; the active cytokines and HMGB1 stimulate inflammatory responses. Primary mediator of macrophage susceptibility to B.anthracis LT: in response to B.anthracis infection, macrophages and dendritic cells release IL1B and undergo pyroptosis. This early inflammatory response to the toxin increases resistance to infection by B.anthracis spores. Constitutes the precursor of the Nlrp1b inflammasome, which mediates autoproteolytic processing within the FIIND domain to generate the N-terminal and C-terminal parts, which are associated non-covalently in absence of pathogens and other damage-associated signals. In terms of biological role, regulatory part that prevents formation of the Nlrp1b inflammasome: in absence of pathogens and other damage-associated signals, interacts with the C-terminal part of Nlrp1b (NACHT, LRR and PYD domains-containing protein 1b, C-terminus), preventing activation of the Nlrp1b inflammasome. In response to pathogen-associated signals, this part is ubiquitinated by the N-end rule pathway and degraded by the proteasome, releasing the cleaved C-terminal part of the protein, which polymerizes and forms the Nlrp1b inflammasome. Its function is as follows. Constitutes the active part of the Nlrp1b inflammasome. In absence of pathogens and other damage-associated signals, interacts with the N-terminal part of Nlrp1b (NACHT, LRR and PYD domains-containing protein 1b, N-terminus), preventing activation of the Nlrp1b inflammasome. In response to pathogen-associated signals, the N-terminal part of Nlrp1b is degraded by the proteasome, releasing this form, which polymerizes to form the Nlrp1b inflammasome complex: the Nlrp1b inflammasome complex then directly recruits pro-caspase-1 (proCASP1) and promotes caspase-1 (CASP1) activation, leading to gasdermin-D (GSDMD) cleavage and subsequent pyroptosis. The chain is NACHT, LRR and PYD domains-containing protein 1b allele 1 from Mus musculus (Mouse).